Here is a 305-residue protein sequence, read N- to C-terminus: Glycine--tRNA ligase alpha subunit (305 aa).

The protein belongs to the class-II aminoacyl-tRNA synthetase family. Tetramer of two alpha and two beta subunits.

Its subcellular location is the cytoplasm. The catalysed reaction is tRNA(Gly) + glycine + ATP = glycyl-tRNA(Gly) + AMP + diphosphate. This is Glycine--tRNA ligase alpha subunit from Streptococcus pneumoniae (strain CGSP14).